A 164-amino-acid polypeptide reads, in one-letter code: Putative 4-hydroxy-4-methyl-2-oxoglutarate aldolase (164 aa).

Residues 80–83 (GGNL) and R102 contribute to the substrate site. D103 contacts a divalent metal cation.

It belongs to the class II aldolase/RraA-like family. As to quaternary structure, homotrimer. A divalent metal cation is required as a cofactor.

It carries out the reaction 4-hydroxy-4-methyl-2-oxoglutarate = 2 pyruvate. The catalysed reaction is oxaloacetate + H(+) = pyruvate + CO2. Functionally, catalyzes the aldol cleavage of 4-hydroxy-4-methyl-2-oxoglutarate (HMG) into 2 molecules of pyruvate. Also contains a secondary oxaloacetate (OAA) decarboxylase activity due to the common pyruvate enolate transition state formed following C-C bond cleavage in the retro-aldol and decarboxylation reactions. The chain is Putative 4-hydroxy-4-methyl-2-oxoglutarate aldolase from Paraburkholderia phytofirmans (strain DSM 17436 / LMG 22146 / PsJN) (Burkholderia phytofirmans).